Here is a 642-residue protein sequence, read N- to C-terminus: Probable serine/threonine-protein kinase drkA (642 aa).

Residues 1–23 (MKKLPFLIIIIYIFLILISISSS) form the signal peptide. Over 24–322 (IDYNYNNDID…KPTISLLKKY (299 aa)) the chain is Extracellular. The span at 106–128 (SENSGSGSNSNSNSKNTDSSTGP) shows a compositional bias: low complexity. Residues 106-136 (SENSGSGSNSNSNSKNTDSSTGPTPSPISIN) are disordered. Asn-136, Asn-140, Asn-158, Asn-244, and Asn-271 each carry an N-linked (GlcNAc...) asparagine glycan. A helical membrane pass occupies residues 323–343 (LIIGFSIVGGLLIIGGCFLLI). The Cytoplasmic segment spans residues 344–642 (RNRYRSSGYY…SDLQYVRQQL (299 aa)). The Protein kinase domain occupies 374 to 627 (IKIGVRIGKG…EQCLERLESI (254 aa)). ATP is bound by residues 380–388 (IGKGNYGEV) and Lys-401. Asp-497 (proton acceptor) is an active-site residue.

The protein belongs to the protein kinase superfamily. TKL Ser/Thr protein kinase family.

It localises to the membrane. It catalyses the reaction L-seryl-[protein] + ATP = O-phospho-L-seryl-[protein] + ADP + H(+). The catalysed reaction is L-threonyl-[protein] + ATP = O-phospho-L-threonyl-[protein] + ADP + H(+). In Dictyostelium discoideum (Social amoeba), this protein is Probable serine/threonine-protein kinase drkA (drkA).